The primary structure comprises 312 residues: Phosphatidate cytidylyltransferase (312 aa).

Positions 1-31 (MASTDPGTGTPLDESVPGIKRAMRQSTKNTP) are disordered. Helical transmembrane passes span 37–57 (LPAA…TLVF), 58–78 (APRI…HEVV), 85–105 (GYVI…WLTW), 110–130 (VGAL…RLVM), 157–177 (ATVF…LLVY), 186–206 (FCLM…GVLF), 223–243 (GFAG…TFLA), and 247–267 (PWVG…GDLV).

Belongs to the CDS family.

It localises to the cell membrane. The enzyme catalyses a 1,2-diacyl-sn-glycero-3-phosphate + CTP + H(+) = a CDP-1,2-diacyl-sn-glycerol + diphosphate. It participates in phospholipid metabolism; CDP-diacylglycerol biosynthesis; CDP-diacylglycerol from sn-glycerol 3-phosphate: step 3/3. The polypeptide is Phosphatidate cytidylyltransferase (cdsA) (Mycobacterium leprae (strain TN)).